We begin with the raw amino-acid sequence, 710 residues long: Polyribonucleotide nucleotidyltransferase (710 aa).

Positions 501 and 507 each coordinate Mg(2+). In terms of domain architecture, KH spans proline 568–isoleucine 628. The region spanning asparagine 638 to lysine 710 is the S1 motif domain.

Belongs to the polyribonucleotide nucleotidyltransferase family. Requires Mg(2+) as cofactor.

It localises to the cytoplasm. It catalyses the reaction RNA(n+1) + phosphate = RNA(n) + a ribonucleoside 5'-diphosphate. Involved in mRNA degradation. Catalyzes the phosphorolysis of single-stranded polyribonucleotides processively in the 3'- to 5'-direction. This chain is Polyribonucleotide nucleotidyltransferase, found in Phytoplasma australiense.